The following is a 178-amino-acid chain: ATP synthase subunit delta (178 aa).

The protein belongs to the ATPase delta chain family. In terms of assembly, F-type ATPases have 2 components, F(1) - the catalytic core - and F(0) - the membrane proton channel. F(1) has five subunits: alpha(3), beta(3), gamma(1), delta(1), epsilon(1). F(0) has three main subunits: a(1), b(2) and c(10-14). The alpha and beta chains form an alternating ring which encloses part of the gamma chain. F(1) is attached to F(0) by a central stalk formed by the gamma and epsilon chains, while a peripheral stalk is formed by the delta and b chains.

The protein localises to the cell membrane. F(1)F(0) ATP synthase produces ATP from ADP in the presence of a proton or sodium gradient. F-type ATPases consist of two structural domains, F(1) containing the extramembraneous catalytic core and F(0) containing the membrane proton channel, linked together by a central stalk and a peripheral stalk. During catalysis, ATP synthesis in the catalytic domain of F(1) is coupled via a rotary mechanism of the central stalk subunits to proton translocation. Its function is as follows. This protein is part of the stalk that links CF(0) to CF(1). It either transmits conformational changes from CF(0) to CF(1) or is implicated in proton conduction. The chain is ATP synthase subunit delta from Streptococcus equi subsp. zooepidemicus (strain H70).